We begin with the raw amino-acid sequence, 198 residues long: Holliday junction branch migration complex subunit RuvA (198 aa).

Residues 1-63 form a domain I region; that stretch reads MYDYIKGQLT…EDAHLLFGFH (63 aa). The interval 64-142 is domain II; sequence TEDEKDVFLK…EAPQETGHTK (79 aa). Residues 143–147 form a flexible linker region; it reads ARSNK. The domain III stretch occupies residues 148-198; the sequence is AGNTQLDEAIEALLALGYKAKELKKIRAFFEGTSETAEQYIKSALKLLMKG.

It belongs to the RuvA family. In terms of assembly, homotetramer. Forms an RuvA(8)-RuvB(12)-Holliday junction (HJ) complex. HJ DNA is sandwiched between 2 RuvA tetramers; dsDNA enters through RuvA and exits via RuvB. An RuvB hexamer assembles on each DNA strand where it exits the tetramer. Each RuvB hexamer is contacted by two RuvA subunits (via domain III) on 2 adjacent RuvB subunits; this complex drives branch migration. In the full resolvosome a probable DNA-RuvA(4)-RuvB(12)-RuvC(2) complex forms which resolves the HJ.

The protein resides in the cytoplasm. Its function is as follows. The RuvA-RuvB-RuvC complex processes Holliday junction (HJ) DNA during genetic recombination and DNA repair, while the RuvA-RuvB complex plays an important role in the rescue of blocked DNA replication forks via replication fork reversal (RFR). RuvA specifically binds to HJ cruciform DNA, conferring on it an open structure. The RuvB hexamer acts as an ATP-dependent pump, pulling dsDNA into and through the RuvAB complex. HJ branch migration allows RuvC to scan DNA until it finds its consensus sequence, where it cleaves and resolves the cruciform DNA. This chain is Holliday junction branch migration complex subunit RuvA, found in Streptococcus pyogenes serotype M1.